A 475-amino-acid polypeptide reads, in one-letter code: Trifunctional enzyme subunit beta, mitochondrial (475 aa).

Residues Met-1–Gln-34 constitute a mitochondrion transit peptide. Lys-53 carries the N6-succinyllysine modification. The residue at position 73 (Lys-73) is an N6-acetyllysine; alternate. Lys-73 is subject to N6-succinyllysine; alternate. The active-site Acyl-thioester intermediate is Cys-139. Residues Ile-174–Asn-221 lie within the membrane without spanning it. An N6-acetyllysine; alternate modification is found at Lys-189. N6-succinyllysine; alternate is present on Lys-189. 3 positions are modified to N6-succinyllysine: Lys-191, Lys-273, and Lys-292. An N6-acetyllysine; alternate modification is found at Lys-294. Lys-294 is subject to N6-succinyllysine; alternate. At Lys-299 the chain carries N6-acetyllysine. Lys-333 carries the post-translational modification N6-acetyllysine; alternate. Lys-333 carries the N6-succinyllysine; alternate modification. An N6-acetyllysine mark is found at Lys-349 and Lys-362. Cys-459 serves as the catalytic Proton donor/acceptor.

Belongs to the thiolase-like superfamily. Thiolase family. Heterotetramer of 2 alpha/HADHA and 2 beta/HADHB subunits; forms the mitochondrial trifunctional enzyme. Also purified as higher order heterooligomers including a 4 alpha/HADHA and 4 beta/HADHB heterooligomer which physiological significance remains unclear. The mitochondrial trifunctional enzyme interacts with MTLN. Interacts with RSAD2/viperin.

Its subcellular location is the mitochondrion. The protein localises to the mitochondrion inner membrane. The protein resides in the mitochondrion outer membrane. It localises to the endoplasmic reticulum. The enzyme catalyses an acyl-CoA + acetyl-CoA = a 3-oxoacyl-CoA + CoA. The catalysed reaction is butanoyl-CoA + acetyl-CoA = 3-oxohexanoyl-CoA + CoA. It catalyses the reaction hexanoyl-CoA + acetyl-CoA = 3-oxooctanoyl-CoA + CoA. It carries out the reaction octanoyl-CoA + acetyl-CoA = 3-oxodecanoyl-CoA + CoA. The enzyme catalyses decanoyl-CoA + acetyl-CoA = 3-oxododecanoyl-CoA + CoA. The catalysed reaction is dodecanoyl-CoA + acetyl-CoA = 3-oxotetradecanoyl-CoA + CoA. It catalyses the reaction tetradecanoyl-CoA + acetyl-CoA = 3-oxohexadecanoyl-CoA + CoA. Its pathway is lipid metabolism; fatty acid beta-oxidation. Its function is as follows. Mitochondrial trifunctional enzyme catalyzes the last three of the four reactions of the mitochondrial beta-oxidation pathway. The mitochondrial beta-oxidation pathway is the major energy-producing process in tissues and is performed through four consecutive reactions breaking down fatty acids into acetyl-CoA. Among the enzymes involved in this pathway, the trifunctional enzyme exhibits specificity for long-chain fatty acids. Mitochondrial trifunctional enzyme is a heterotetrameric complex composed of two proteins, the trifunctional enzyme subunit alpha/HADHA carries the 2,3-enoyl-CoA hydratase and the 3-hydroxyacyl-CoA dehydrogenase activities, while the trifunctional enzyme subunit beta/HADHB described here bears the 3-ketoacyl-CoA thiolase activity. This is Trifunctional enzyme subunit beta, mitochondrial (Hadhb) from Rattus norvegicus (Rat).